We begin with the raw amino-acid sequence, 321 residues long: Protein-L-isoaspartate O-methyltransferase (321 aa).

Residues 21 to 31 (KPAERQREKRI) are compositionally biased toward basic and acidic residues. The interval 21–65 (KPAERQREKRISSGVNAVSLPTPARTASAERASSTPAPGPGPQRV) is disordered. The span at 41 to 56 (PTPARTASAERASSTP) shows a compositional bias: low complexity. Serine 153 is an active-site residue.

This sequence belongs to the methyltransferase superfamily. L-isoaspartyl/D-aspartyl protein methyltransferase family.

Its subcellular location is the cytoplasm. It catalyses the reaction [protein]-L-isoaspartate + S-adenosyl-L-methionine = [protein]-L-isoaspartate alpha-methyl ester + S-adenosyl-L-homocysteine. Catalyzes the methyl esterification of L-isoaspartyl residues in peptides and proteins that result from spontaneous decomposition of normal L-aspartyl and L-asparaginyl residues. It plays a role in the repair and/or degradation of damaged proteins. The sequence is that of Protein-L-isoaspartate O-methyltransferase from Ralstonia nicotianae (strain ATCC BAA-1114 / GMI1000) (Ralstonia solanacearum).